The chain runs to 549 residues: Serine/threonine-protein phosphatase PPQ (549 aa).

Polar residues predominate over residues M1–A13. 4 disordered regions span residues M1 to P50, Y64 to L85, T133 to S158, and S189 to S219. Composition is skewed to low complexity over residues N16–S32 and A68–N83. Residues A205–K217 show a composition bias toward polar residues. D301, H303, D329, and N361 together coordinate Mn(2+). Residue H362 is the Proton donor of the active site. Mn(2+) is bound by residues H410 and H485.

The protein belongs to the PPP phosphatase family. PP-Z subfamily. Requires Mn(2+) as cofactor.

It carries out the reaction O-phospho-L-seryl-[protein] + H2O = L-seryl-[protein] + phosphate. The enzyme catalyses O-phospho-L-threonyl-[protein] + H2O = L-threonyl-[protein] + phosphate. Functionally, phosphatase involved in the regulation of protein synthesis. Affects translational accuracy. The sequence is that of Serine/threonine-protein phosphatase PPQ (PPQ1) from Saccharomyces cerevisiae (strain ATCC 204508 / S288c) (Baker's yeast).